The sequence spans 734 residues: Casein kinase II subunit alpha'-interacting protein (734 aa).

The tract at residues 608–654 (SLLPSTSSSTSSSSTTSSSSSVASASSDSSSSSSSSSSFSISSSSSP) is disordered. The span at 612–654 (STSSSTSSSSTTSSSSSVASASSDSSSSSSSSSSFSISSSSSP) shows a compositional bias: low complexity.

In terms of assembly, interacts (via C-terminus) with CSNK2A2. Post-translationally, phosphorylated by CK2 (casein kinase II), specifically by complexes containing catalytic subunit CSNK2A2.

The protein resides in the nucleus. In terms of biological role, may play a role in chromatin regulation of male germ cells. The protein is Casein kinase II subunit alpha'-interacting protein of Homo sapiens (Human).